Here is a 368-residue protein sequence, read N- to C-terminus: Chaperone protein DnaJ (368 aa).

The J domain maps to 5 to 69 (DYYEVLGVAR…NQRARYDQFG (65 aa)). The CR-type zinc finger occupies 125 to 207 (GVEKVITIPV…CRGAGRVRKN (83 aa)). 8 residues coordinate Zn(2+): cysteine 138, cysteine 141, cysteine 155, cysteine 158, cysteine 181, cysteine 184, cysteine 195, and cysteine 198. 4 CXXCXGXG motif repeats span residues 138 to 145 (CGTCHGSG), 155 to 162 (CKRCGGSG), 181 to 188 (CSTCHGRG), and 195 to 202 (CETCRGAG).

Belongs to the DnaJ family. Homodimer. It depends on Zn(2+) as a cofactor.

It localises to the cytoplasm. Functionally, participates actively in the response to hyperosmotic and heat shock by preventing the aggregation of stress-denatured proteins and by disaggregating proteins, also in an autonomous, DnaK-independent fashion. Unfolded proteins bind initially to DnaJ; upon interaction with the DnaJ-bound protein, DnaK hydrolyzes its bound ATP, resulting in the formation of a stable complex. GrpE releases ADP from DnaK; ATP binding to DnaK triggers the release of the substrate protein, thus completing the reaction cycle. Several rounds of ATP-dependent interactions between DnaJ, DnaK and GrpE are required for fully efficient folding. Also involved, together with DnaK and GrpE, in the DNA replication of plasmids through activation of initiation proteins. This chain is Chaperone protein DnaJ, found in Exiguobacterium sibiricum (strain DSM 17290 / CCUG 55495 / CIP 109462 / JCM 13490 / 255-15).